We begin with the raw amino-acid sequence, 267 residues long: 3-methyl-2-oxobutanoate hydroxymethyltransferase (267 aa).

Residues Asp-45 and Asp-84 each coordinate Mg(2+). Residues 45–46 (DS), Asp-84, and Lys-113 each bind 3-methyl-2-oxobutanoate. Glu-115 serves as a coordination point for Mg(2+). The active-site Proton acceptor is Glu-182.

It belongs to the PanB family. In terms of assembly, homodecamer; pentamer of dimers. Mg(2+) serves as cofactor.

It localises to the cytoplasm. The catalysed reaction is 3-methyl-2-oxobutanoate + (6R)-5,10-methylene-5,6,7,8-tetrahydrofolate + H2O = 2-dehydropantoate + (6S)-5,6,7,8-tetrahydrofolate. It functions in the pathway cofactor biosynthesis; coenzyme A biosynthesis. In terms of biological role, catalyzes the reversible reaction in which hydroxymethyl group from 5,10-methylenetetrahydrofolate is transferred onto alpha-ketoisovalerate to form ketopantoate. The polypeptide is 3-methyl-2-oxobutanoate hydroxymethyltransferase (Saccharolobus islandicus (strain M.16.27) (Sulfolobus islandicus)).